The chain runs to 146 residues: Acidic phospholipase A2 S14-72F (146 aa).

The N-terminal stretch at 1-19 (MYPAHLLVLLAVCVSLLGA) is a signal peptide. Residues 20 to 27 (ASIPPQPL) constitute a propeptide that is removed on maturation. 7 disulfide bridges follow: Cys-38–Cys-98, Cys-54–Cys-145, Cys-56–Cys-72, Cys-71–Cys-126, Cys-78–Cys-119, Cys-87–Cys-112, and Cys-105–Cys-117. Tyr-55, Gly-57, and Gly-59 together coordinate Ca(2+). Residue His-75 is part of the active site. Asp-76 contacts Ca(2+). Asp-120 is an active-site residue.

Belongs to the phospholipase A2 family. Group I subfamily. D49 sub-subfamily. Ca(2+) serves as cofactor. Expressed by the venom gland.

It is found in the secreted. The catalysed reaction is a 1,2-diacyl-sn-glycero-3-phosphocholine + H2O = a 1-acyl-sn-glycero-3-phosphocholine + a fatty acid + H(+). Snake venom phospholipase A2 (PLA2) that inhibits collagen-induced platelet aggregation. PLA2 catalyzes the calcium-dependent hydrolysis of the 2-acyl groups in 3-sn-phosphoglycerides. This chain is Acidic phospholipase A2 S14-72F, found in Austrelaps superbus (Lowland copperhead snake).